Consider the following 263-residue polypeptide: Kallikrein 1-related peptidase b24 (263 aa).

The first 17 residues, 1-17 (MWFLILFLALSLGGIDA), serve as a signal peptide directing secretion. Residues 18 to 24 (APPVQSR) constitute a propeptide, activation peptide. The 236-residue stretch at 25-260 (VVGGFKCEKN…FASWIKDTMA (236 aa)) folds into the Peptidase S1 domain. 5 disulfides stabilise this stretch: Cys-31/Cys-175, Cys-50/Cys-66, Cys-154/Cys-221, Cys-186/Cys-200, and Cys-211/Cys-236. His-65 functions as the Charge relay system in the catalytic mechanism. N-linked (GlcNAc...) asparagine glycans are attached at residues Asn-69 and Asn-105. Asp-122 (charge relay system) is an active-site residue. Asn-185 carries N-linked (GlcNAc...) asparagine glycosylation. Ser-215 functions as the Charge relay system in the catalytic mechanism.

Belongs to the peptidase S1 family. Kallikrein subfamily.

The catalysed reaction is Preferential cleavage of Arg-|-Xaa bonds in small molecule substrates. Highly selective action to release kallidin (lysyl-bradykinin) from kininogen involves hydrolysis of Met-|-Xaa or Leu-|-Xaa.. In terms of biological role, glandular kallikreins cleave Met-Lys and Arg-Ser bonds in kininogen to release Lys-bradykinin. The polypeptide is Kallikrein 1-related peptidase b24 (Klk1b24) (Mus musculus (Mouse)).